A 138-amino-acid polypeptide reads, in one-letter code: MERTFAMIKPDGVRRGLTPEILARIARKGYRVVGLKQMVIARETAENHYGEHRERPFFGELVDFITGGPVVAIALEGENAIAGWRAMMGATNPANAAPGTIRADFATTTGENVTHGSDSAESAQRELALFFQEGELLA.

ATP-binding residues include K9, F57, R85, T91, R102, and N112. The active-site Pros-phosphohistidine intermediate is the H115.

This sequence belongs to the NDK family. Homotetramer. It depends on Mg(2+) as a cofactor.

It is found in the cytoplasm. The enzyme catalyses a 2'-deoxyribonucleoside 5'-diphosphate + ATP = a 2'-deoxyribonucleoside 5'-triphosphate + ADP. The catalysed reaction is a ribonucleoside 5'-diphosphate + ATP = a ribonucleoside 5'-triphosphate + ADP. Its function is as follows. Major role in the synthesis of nucleoside triphosphates other than ATP. The ATP gamma phosphate is transferred to the NDP beta phosphate via a ping-pong mechanism, using a phosphorylated active-site intermediate. The protein is Nucleoside diphosphate kinase of Deinococcus deserti (strain DSM 17065 / CIP 109153 / LMG 22923 / VCD115).